The primary structure comprises 362 residues: 3-dehydroquinate synthase (362 aa).

Belongs to the archaeal-type DHQ synthase family.

It carries out the reaction 2-amino-2,3,7-trideoxy-D-lyxo-hept-6-ulosonate + NAD(+) + H2O = 3-dehydroquinate + NH4(+) + NADH + H(+). Catalyzes the oxidative deamination and cyclization of 2-amino-3,7-dideoxy-D-threo-hept-6-ulosonic acid (ADH) to yield 3-dehydroquinate (DHQ), which is fed into the canonical shikimic pathway of aromatic amino acid biosynthesis. The sequence is that of 3-dehydroquinate synthase from Methanococcus aeolicus (strain ATCC BAA-1280 / DSM 17508 / OCM 812 / Nankai-3).